An 89-amino-acid polypeptide reads, in one-letter code: Small ribosomal subunit protein uS15 (89 aa).

Over residues methionine 1–aspartate 21 the composition is skewed to basic and acidic residues. The interval methionine 1–serine 24 is disordered.

This sequence belongs to the universal ribosomal protein uS15 family. As to quaternary structure, part of the 30S ribosomal subunit. Forms a bridge to the 50S subunit in the 70S ribosome, contacting the 23S rRNA.

Its function is as follows. One of the primary rRNA binding proteins, it binds directly to 16S rRNA where it helps nucleate assembly of the platform of the 30S subunit by binding and bridging several RNA helices of the 16S rRNA. In terms of biological role, forms an intersubunit bridge (bridge B4) with the 23S rRNA of the 50S subunit in the ribosome. This chain is Small ribosomal subunit protein uS15, found in Enterococcus faecalis (strain ATCC 700802 / V583).